A 145-amino-acid chain; its full sequence is Large ribosomal subunit protein uL16 (145 aa).

This sequence belongs to the universal ribosomal protein uL16 family. Part of the 50S ribosomal subunit.

In terms of biological role, binds 23S rRNA and is also seen to make contacts with the A and possibly P site tRNAs. This is Large ribosomal subunit protein uL16 from Exiguobacterium sibiricum (strain DSM 17290 / CCUG 55495 / CIP 109462 / JCM 13490 / 255-15).